We begin with the raw amino-acid sequence, 176 residues long: 3-hydroxydecanoyl-[acyl-carrier-protein] dehydratase (176 aa).

The active site involves H71.

It belongs to the thioester dehydratase family. FabA subfamily. In terms of assembly, homodimer.

It is found in the cytoplasm. It catalyses the reaction a (3R)-hydroxyacyl-[ACP] = a (2E)-enoyl-[ACP] + H2O. It carries out the reaction (3R)-hydroxydecanoyl-[ACP] = (2E)-decenoyl-[ACP] + H2O. The catalysed reaction is (2E)-decenoyl-[ACP] = (3Z)-decenoyl-[ACP]. Its pathway is lipid metabolism; fatty acid biosynthesis. In terms of biological role, necessary for the introduction of cis unsaturation into fatty acids. Catalyzes the dehydration of (3R)-3-hydroxydecanoyl-ACP to E-(2)-decenoyl-ACP and then its isomerization to Z-(3)-decenoyl-ACP. Can catalyze the dehydratase reaction for beta-hydroxyacyl-ACPs with saturated chain lengths up to 16:0, being most active on intermediate chain length. In Rhodopseudomonas palustris (strain BisA53), this protein is 3-hydroxydecanoyl-[acyl-carrier-protein] dehydratase.